The primary structure comprises 305 residues: tRNA pseudouridine synthase B (305 aa).

The active-site Nucleophile is the D39.

Belongs to the pseudouridine synthase TruB family. Type 1 subfamily.

The enzyme catalyses uridine(55) in tRNA = pseudouridine(55) in tRNA. Its function is as follows. Responsible for synthesis of pseudouridine from uracil-55 in the psi GC loop of transfer RNAs. This chain is tRNA pseudouridine synthase B, found in Staphylococcus epidermidis (strain ATCC 35984 / DSM 28319 / BCRC 17069 / CCUG 31568 / BM 3577 / RP62A).